A 310-amino-acid polypeptide reads, in one-letter code: MFSSSMFPHLILPAIGSSKVRTMVLPFAFVGFFIFPICLASLLDWNDAYEYPKYSFEWSNVSILEGDIDSIKEKTEKTKLSSLFYAGKHEYFCVYPNASLIKQNSTTEPSYDLQELRIQGTEKINELANVFLIENRGYWTYDYVYGQHVRQYHLEPQQGSDKVLANPMYILGTAPNTQTKKNLEENWAIGFVEGKAYLQTTFRNGTMCDITKRPRHVILSYECSTNSDTPEITQYQEVSSCAYSMTIHVPGLCSLPAFKIQEDIPSEKIVCYNVIKEKSNEVDHKDSQHVVDEVAQTSPPEVKEVETQSS.

The signal sequence occupies residues 1–40 (MFSSSMFPHLILPAIGSSKVRTMVLPFAFVGFFIFPICLA). N-linked (GlcNAc...) asparagine glycosylation is found at Asn60, Asn97, and Asn104. The 127-residue stretch at 129 to 255 (NVFLIENRGY…TIHVPGLCSL (127 aa)) folds into the MRH domain. A mannooligosaccharide derivative is bound by residues Trp139 and Gln151. Residue Asn204 is glycosylated (N-linked (GlcNAc...) asparagine). Cystine bridges form between Cys208–Cys241 and Cys223–Cys253. Positions 209, 215, 237, and 243 each coordinate a mannooligosaccharide derivative. Composition is skewed to basic and acidic residues over residues 282–292 (VDHKDSQHVVD) and 301–310 (EVKEVETQSS). The interval 282–310 (VDHKDSQHVVDEVAQTSPPEVKEVETQSS) is disordered.

Belongs to the OS-9 family. In terms of assembly, interacts with missfolded ER lumenal proteins.

It localises to the endoplasmic reticulum membrane. Functionally, lectin involved in the quality control of the secretory pathway. As a member of the endoplasmic reticulum-associated degradation lumenal (ERAD-L) surveillance system, targets misfolded endoplasmic reticulum lumenal glycoproteins for degradation. This Schizosaccharomyces pombe (strain 972 / ATCC 24843) (Fission yeast) protein is Protein OS-9 homolog (yos9).